Consider the following 338-residue polypeptide: tRNA N6-adenosine threonylcarbamoyltransferase (338 aa).

2 residues coordinate Fe cation: H111 and H115. Substrate is bound by residues L134–G138, D167, G180, and N272. Residue D300 coordinates Fe cation.

This sequence belongs to the KAE1 / TsaD family. Fe(2+) is required as a cofactor.

It is found in the cytoplasm. It catalyses the reaction L-threonylcarbamoyladenylate + adenosine(37) in tRNA = N(6)-L-threonylcarbamoyladenosine(37) in tRNA + AMP + H(+). Its function is as follows. Required for the formation of a threonylcarbamoyl group on adenosine at position 37 (t(6)A37) in tRNAs that read codons beginning with adenine. Is involved in the transfer of the threonylcarbamoyl moiety of threonylcarbamoyl-AMP (TC-AMP) to the N6 group of A37, together with TsaE and TsaB. TsaD likely plays a direct catalytic role in this reaction. This is tRNA N6-adenosine threonylcarbamoyltransferase from Shewanella baltica (strain OS155 / ATCC BAA-1091).